Here is a 213-residue protein sequence, read N- to C-terminus: Nucleolar protein 12 (213 aa).

Positions Gly-33–Val-96 form a coiled coil. Residues Thr-109–Glu-213 form a disordered region. Residues Ala-130–Ser-139 are compositionally biased toward acidic residues. Basic residues predominate over residues Ala-170–Arg-182.

The protein belongs to the RRP17 family. In terms of assembly, interacts with KIAA1191.

It localises to the nucleus. It is found in the nucleolus. Its subcellular location is the cytoplasm. In terms of biological role, multifunctional RNA binding protein that plays a role in RNA metabolism and DNA maintenance. Participates in the resolution of DNA stress and the maintenance of genome integrity by localizing to sites of DNA insults. Also plays a role in proper nucleolar organization by limiting nucleolar size and regulating nucleolar number. Mechanistically, regulates the nucleolar levels of fibrillarin and nucleolin, two key players in pre-rRNA processing and ribosome assembly. The protein is Nucleolar protein 12 (NOL12) of Pongo abelii (Sumatran orangutan).